We begin with the raw amino-acid sequence, 541 residues long: Transmembrane protein 87A (541 aa).

A signal peptide spans 1 to 26 (MAAASFQPLKCLLLWVFFVITPPVKA). Residues 27–209 (VPEPGIWTVP…HGFISASDWP (183 aa)) are Lumenal-facing. N-linked (GlcNAc...) asparagine glycans are attached at residues Asn52, Asn109, Asn148, and Asn189. 2 disulfides stabilise this stretch: Cys65–Cys116 and Cys82–Cys416. The chain crosses the membrane as a helical span at residues 210-230 (LMIFYMVMCIMYILLALLWFI). The Cytoplasmic segment spans residues 231–241 (WSACYWKDLLR). The chain crosses the membrane as a helical span at residues 242–262 (IQFWIAAVIFLGMLEKAVYYA). Residues 263-293 (EYQNTDNTGVSSHGLLIFAELISSIKRTLAR) lie on the Lumenal side of the membrane. The chain crosses the membrane as a helical span at residues 294-314 (LLVTIVSLGYGIIKPRLGAVM). Residues 315–316 (HR) lie on the Cytoplasmic side of the membrane. Residues 317–337 (VVGMGVLYFVFAAVEGVMRII) form a helical membrane-spanning segment. At 338–344 (GAKEYDL) the chain is on the lumenal side. Residues 345–365 (VLLAGIPLALLDSGLCWWIFV) traverse the membrane as a helical segment. The Cytoplasmic portion of the chain corresponds to 366 to 384 (SLAQTMKTLKLRKNTVKYS). Residues 385–405 (LYRHFTNTLIFAILASIIFMI) traverse the membrane as a helical segment. The Lumenal portion of the chain corresponds to 406–422 (WRTKKFQLVDCQADWME). A helical membrane pass occupies residues 423–443 (LWVDDAYWRFLFFIILLVIMF). Over 444-541 (LWRPSANNQR…MTKYEMSKIE (98 aa)) the chain is Cytoplasmic.

This sequence belongs to the LU7TM family. TMEM87 subfamily.

The protein localises to the cell membrane. It localises to the golgi apparatus membrane. In terms of biological role, potential monoatomic ion channel gated by mechanical force, implicated in normal touch sensitivity through the generation of mechanically activated currents. However, a direct channel activity is debated and an alternative could be that it functions as a chaperone for an unidentified mechanosensitive ion channel. Could also be involved in cell mechanosensitivity regulating cell adhesion and migration. May also be involved in retrograde transport from endosomes to the trans-Golgi network (TGN). The protein is Transmembrane protein 87A of Xenopus tropicalis (Western clawed frog).